The following is an 88-amino-acid chain: Synaptonemal complex central element protein 3 (88 aa).

Residues 7–75 (EERNYDNMLK…FVNCKEEMEK (69 aa)) adopt a coiled-coil conformation.

As to quaternary structure, homodimer. Can form higher-order homooligomers. Interacts with SYCP1 (via tetrameric core); the interaction remodels SYCP1 homotetramers to 2:1 heterotrimers with SYCE3. SYCP1/SYCE3 heterotrimers form lattice assemblies as part of the mature synaptonemal complex via both lateral and head-to-head interactions. Interacts with the SYCE1-SIX6OS1 complex; the interaction recruits the SYCE1-SIX6OS1 complex to the central element of the synaptonemal complex. Interacts with the SYCE2-TEX12 complex; the interaction promotes fibrous assembly of SYCE2-TEX12 as part of the synaptonemal complex central element. Interacts with SYCE1. Interacts with SYCE2. Interacts with proteasome subunit PSMA8; to participate in meiosis progression during spermatogenesis. Interacts with SPO16.

It localises to the nucleus. The protein resides in the chromosome. In terms of biological role, major component of the transverse central element of synaptonemal complexes (SCS), formed between homologous chromosomes during meiotic prophase. Required for the assembly of the central element of the synaptonemal complex during meiosis, via remodeling of SYCP1 lattice structures and promoting recruitment of SYCE2-TEX12 and SYCE1-SIX60S1 complexes. Required for chromosome loading of the central element-specific SCS proteins, and for initiating synapsis between homologous chromosomes. Chromosome loading appears to require SYCP1. Required for fertility and normal testis development. In Homo sapiens (Human), this protein is Synaptonemal complex central element protein 3.